Here is a 318-residue protein sequence, read N- to C-terminus: MFTINILLLIIPILLAVAFLTLVERKVLGYMQLRKGPNIVGPYGLLQPIADAIKLFTKEPLQPSTSSTSMFIIAPIMALTLALTMWVPLPMPHPLINMNLGVLFMLAMSSLAVYSILWSGWASNSKYALIGALRAVAQTISYEVTLAIILLSVLLMNGSFTLSTLITTQEHLWLIFPSWPLTMMWFISTLAETNRAPFDLTEGESELVSGFNVEYAAGPFALFFMAEYTNIIMMNAFTTILFLGAFHNPYMPELYTVNFTIKTLLLTISFLWIRASYPRFRYDQLMHLLWKNFLPLTLALCMWHVSLPITMSSIPPQT.

8 helical membrane passes run 2 to 22 (FTIN…FLTL), 70 to 90 (MFII…VPLP), 100 to 120 (LGVL…LWSG), 146 to 166 (LAII…STLI), 171 to 191 (HLWL…STLA), 222 to 242 (LFFM…TILF), 253 to 273 (ELYT…FLWI), and 294 to 314 (LPLT…MSSI).

The protein belongs to the complex I subunit 1 family.

It is found in the mitochondrion inner membrane. The catalysed reaction is a ubiquinone + NADH + 5 H(+)(in) = a ubiquinol + NAD(+) + 4 H(+)(out). Functionally, core subunit of the mitochondrial membrane respiratory chain NADH dehydrogenase (Complex I) that is believed to belong to the minimal assembly required for catalysis. Complex I functions in the transfer of electrons from NADH to the respiratory chain. The immediate electron acceptor for the enzyme is believed to be ubiquinone. The sequence is that of NADH-ubiquinone oxidoreductase chain 1 (MT-ND1) from Rhinoceros unicornis (Greater Indian rhinoceros).